A 655-amino-acid polypeptide reads, in one-letter code: p-hydroxybenzoic acid efflux pump subunit AaeB (655 aa).

Helical transmembrane passes span 13 to 33 (FAVKLASAIVLALFVGFHFQL), 38 to 58 (WAVLTAAIVAAGPAFAAGGEP), 69 to 89 (LRIIGTFIGCIAALTIIILMI), 93 to 113 (LLMVLVCCIWAGFCTWLSSLV), 121 to 141 (WGLAGYTALIIVITIQTEPLL), 152 to 172 (EIVIGIVCAIVADLLFSPRSI), 370 to 390 (LFWLWTGWTSGSGAMVMIAVV), 407 to 427 (FLYGTIAALPLGALYFLVILP), 431 to 451 (QSMLLLCISLAVMAFFIGIEV), 459 to 479 (LGALASTINILVLDNPMTFHF), and 482 to 502 (FLDSALGQLVGCFLAMMVILL).

This sequence belongs to the aromatic acid exporter ArAE (TC 2.A.85) family.

The protein localises to the cell inner membrane. Functionally, forms an efflux pump with AaeA. Could function as a metabolic relief valve, allowing to eliminate certain compounds when they accumulate to high levels in the cell. In Enterobacter cloacae subsp. cloacae (strain ATCC 13047 / DSM 30054 / NBRC 13535 / NCTC 10005 / WDCM 00083 / NCDC 279-56), this protein is p-hydroxybenzoic acid efflux pump subunit AaeB.